Reading from the N-terminus, the 471-residue chain is 6-phosphogluconate dehydrogenase, decarboxylating (471 aa).

NADP(+) is bound by residues 10 to 15 (GLAVMG), 33 to 35 (NRT), 75 to 77 (VKA), and asparagine 103. Residues asparagine 103 and 129–131 (SGG) each bind substrate. The active-site Proton acceptor is the lysine 183. 186-187 (HN) is a substrate binding site. The active-site Proton donor is the glutamate 190. Substrate-binding residues include tyrosine 191, lysine 263, arginine 290, arginine 449, and histidine 455.

It belongs to the 6-phosphogluconate dehydrogenase family. As to quaternary structure, homodimer.

It carries out the reaction 6-phospho-D-gluconate + NADP(+) = D-ribulose 5-phosphate + CO2 + NADPH. It participates in carbohydrate degradation; pentose phosphate pathway; D-ribulose 5-phosphate from D-glucose 6-phosphate (oxidative stage): step 3/3. Its function is as follows. Catalyzes the oxidative decarboxylation of 6-phosphogluconate to ribulose 5-phosphate and CO(2), with concomitant reduction of NADP to NADPH. The chain is 6-phosphogluconate dehydrogenase, decarboxylating (gnd) from Synechococcus elongatus (strain ATCC 33912 / PCC 7942 / FACHB-805) (Anacystis nidulans R2).